Reading from the N-terminus, the 384-residue chain is Putative glutamate--cysteine ligase 2 (384 aa).

Belongs to the glutamate--cysteine ligase type 2 family. YbdK subfamily.

It catalyses the reaction L-cysteine + L-glutamate + ATP = gamma-L-glutamyl-L-cysteine + ADP + phosphate + H(+). ATP-dependent carboxylate-amine ligase which exhibits weak glutamate--cysteine ligase activity. This is Putative glutamate--cysteine ligase 2 from Ruegeria pomeroyi (strain ATCC 700808 / DSM 15171 / DSS-3) (Silicibacter pomeroyi).